Consider the following 415-residue polypeptide: 4-hydroxy-3-methylbut-2-enyl diphosphate reductase (415 aa).

Cys-66 is a [4Fe-4S] cluster binding site. Residue His-96 coordinates (2E)-4-hydroxy-3-methylbut-2-enyl diphosphate. Residue His-96 participates in dimethylallyl diphosphate binding. His-96 contacts isopentenyl diphosphate. Cys-158 lines the [4Fe-4S] cluster pocket. A (2E)-4-hydroxy-3-methylbut-2-enyl diphosphate-binding site is contributed by His-186. His-186 lines the dimethylallyl diphosphate pocket. His-186 serves as a coordination point for isopentenyl diphosphate. The active-site Proton donor is Glu-188. Position 259 (Thr-259) interacts with (2E)-4-hydroxy-3-methylbut-2-enyl diphosphate. A [4Fe-4S] cluster-binding site is contributed by Cys-297. Residues Ser-326, Ser-327, Asn-328, and Ser-388 each contribute to the (2E)-4-hydroxy-3-methylbut-2-enyl diphosphate site. The dimethylallyl diphosphate site is built by Ser-326, Ser-327, Asn-328, and Ser-388. 4 residues coordinate isopentenyl diphosphate: Ser-326, Ser-327, Asn-328, and Ser-388.

It belongs to the IspH family. [4Fe-4S] cluster is required as a cofactor.

The enzyme catalyses isopentenyl diphosphate + 2 oxidized [2Fe-2S]-[ferredoxin] + H2O = (2E)-4-hydroxy-3-methylbut-2-enyl diphosphate + 2 reduced [2Fe-2S]-[ferredoxin] + 2 H(+). It carries out the reaction dimethylallyl diphosphate + 2 oxidized [2Fe-2S]-[ferredoxin] + H2O = (2E)-4-hydroxy-3-methylbut-2-enyl diphosphate + 2 reduced [2Fe-2S]-[ferredoxin] + 2 H(+). It functions in the pathway isoprenoid biosynthesis; dimethylallyl diphosphate biosynthesis; dimethylallyl diphosphate from (2E)-4-hydroxy-3-methylbutenyl diphosphate: step 1/1. Its pathway is isoprenoid biosynthesis; isopentenyl diphosphate biosynthesis via DXP pathway; isopentenyl diphosphate from 1-deoxy-D-xylulose 5-phosphate: step 6/6. In terms of biological role, catalyzes the conversion of 1-hydroxy-2-methyl-2-(E)-butenyl 4-diphosphate (HMBPP) into a mixture of isopentenyl diphosphate (IPP) and dimethylallyl diphosphate (DMAPP). Acts in the terminal step of the DOXP/MEP pathway for isoprenoid precursor biosynthesis. In Acaryochloris marina (strain MBIC 11017), this protein is 4-hydroxy-3-methylbut-2-enyl diphosphate reductase.